The primary structure comprises 346 residues: Anthranilate phosphoribosyltransferase (346 aa).

Residues glycine 81, 84–85 (GD), 91–94 (NVST), 109–117 (KHGNRSVSS), and serine 121 each bind 5-phospho-alpha-D-ribose 1-diphosphate. Glycine 81 contacts anthranilate. Serine 93 serves as a coordination point for Mg(2+). Asparagine 112 lines the anthranilate pocket. Arginine 167 contacts anthranilate. Mg(2+)-binding residues include aspartate 226 and glutamate 227.

The protein belongs to the anthranilate phosphoribosyltransferase family. Homodimer. Requires Mg(2+) as cofactor.

The catalysed reaction is N-(5-phospho-beta-D-ribosyl)anthranilate + diphosphate = 5-phospho-alpha-D-ribose 1-diphosphate + anthranilate. Its pathway is amino-acid biosynthesis; L-tryptophan biosynthesis; L-tryptophan from chorismate: step 2/5. Catalyzes the transfer of the phosphoribosyl group of 5-phosphorylribose-1-pyrophosphate (PRPP) to anthranilate to yield N-(5'-phosphoribosyl)-anthranilate (PRA). This chain is Anthranilate phosphoribosyltransferase, found in Hahella chejuensis (strain KCTC 2396).